The chain runs to 734 residues: Cullin-4 (734 aa).

The region spanning 666–728 (DRQFELQASI…KEYLEREDND (63 aa)) is the Cullin neddylation domain. A Glycyl lysine isopeptide (Lys-Gly) (interchain with G-Cter in NEDD8) cross-link involves residue Lys680.

It belongs to the cullin family. In terms of assembly, component of the Clr4 methyltransferase complex (ClrC) composed of at least clr4, rik1, pcu4, rbx1, raf1 and raf2. The cullin pcu4, rik1, raf1, raf2 and the ring-box protein rbx1 are components of an E3 ubiquitin ligase, whose activity is essential for heterochromatin assembly. Post-translationally, neddylated; enhancing the ubiquitin-ligase activity.

It localises to the cytoplasm. Its subcellular location is the nucleus. It is found in the chromosome. It participates in protein modification; protein ubiquitination. Required, indirectly, for activation of ribonucleotide reductase through the degradation of the protein spd1, thereby supplying deoxyribonucleotides for DNA replication and repair. Also has a role as a scaffold for assembling ubiquitin ligases. Component of the Clr4 methyltransferase complex (ClrC) which contributes to the establishment of heterochromatin by specifically methylating histone H3 to form H3K9me. ClrC preferentially ubiquitylates H3K14 and ClrC-mediated H3 ubiquitination promotes clr4 methyltransferase activity for the methylation of H3K9. H3K9me represents a specific tag for epigenetic transcriptional repression by recruiting swi6/HP1 to methylated histones which leads to transcriptional silencing within centromeric heterochromatin, telomeric regions and at the silent mating-type loci. This Schizosaccharomyces pombe (strain 972 / ATCC 24843) (Fission yeast) protein is Cullin-4 (pcu4).